The following is a 48-amino-acid chain: MPQLVPFYFMNLLTGGILAISLLLYFVATYLLPNILRLLIARNIIIKL.

The helical transmembrane segment at 12–32 (LLTGGILAISLLLYFVATYLL) threads the bilayer.

This sequence belongs to the ATPase protein 8 family. F-type ATPases have 2 components, CF(1) - the catalytic core - and CF(0) - the membrane proton channel.

Its subcellular location is the mitochondrion membrane. Mitochondrial membrane ATP synthase (F(1)F(0) ATP synthase or Complex V) produces ATP from ADP in the presence of a proton gradient across the membrane which is generated by electron transport complexes of the respiratory chain. F-type ATPases consist of two structural domains, F(1) - containing the extramembraneous catalytic core and F(0) - containing the membrane proton channel, linked together by a central stalk and a peripheral stalk. During catalysis, ATP synthesis in the catalytic domain of F(1) is coupled via a rotary mechanism of the central stalk subunits to proton translocation. Part of the complex F(0) domain. Minor subunit located with subunit a in the membrane. In Candida parapsilosis (Yeast), this protein is ATP synthase protein 8 (ATP8).